A 558-amino-acid chain; its full sequence is Germacrene A synthase short form (558 aa).

5 residues coordinate Mg(2+): Asp-311, Asp-315, Asp-455, Thr-459, and Glu-463. The DDXXD motif motif lies at 311–315 (DDTYD).

It belongs to the terpene synthase family. It depends on Mg(2+) as a cofactor. In terms of tissue distribution, expressed in roots and in green and etiolated seedlings.

The enzyme catalyses (2E,6E)-farnesyl diphosphate = (+)-(R)-germacrene A + diphosphate. It participates in secondary metabolite biosynthesis; terpenoid biosynthesis. Its function is as follows. Involved in sesquiterpene lactone biosynthesis. Produces exclusively (+)-germacrene A. This chain is Germacrene A synthase short form, found in Cichorium intybus (Chicory).